We begin with the raw amino-acid sequence, 539 residues long: uncharacterized protein (539 aa).

2 ABC transporter domains span residues valine 8 to leucine 265 and isoleucine 307 to methionine 537. Glycine 339–serine 346 is an ATP binding site.

It belongs to the ABC transporter superfamily.

The protein resides in the mitochondrion. This is an uncharacterized protein from Saccharomyces cerevisiae (strain ATCC 204508 / S288c) (Baker's yeast).